A 334-amino-acid polypeptide reads, in one-letter code: Protein SCO1 homolog 1, mitochondrial (334 aa).

The transit peptide at 1-13 (MASALCRTASRLR) directs the protein to the mitochondrion. A disordered region spans residues 74-120 (SASDTTSKHDSGKPETKSSEKNEKSGGSESSDGGSDHKNERASGKDV). 2 stretches are compositionally biased toward basic and acidic residues: residues 79–99 (TSKHDSGKPETKSSEKNEKSG) and 107–120 (GSDHKNERASGKDV). Residues 125-144 (VSWMSFFLLFATGAGLVYYY) form a helical membrane-spanning segment. The region spanning 166–331 (PSAGKAAIGG…TDGVVKEIRQ (166 aa)) is the Thioredoxin domain. Cu cation-binding residues include C206, C210, and H295.

This sequence belongs to the SCO1/2 family. Expressed in the whole plant with highest expression in imbibed seeds, embryos, endosperm, and root tips.

Its subcellular location is the mitochondrion inner membrane. Its function is as follows. Thought to play a role in cellular copper homeostasis, mitochondrial redox signaling or insertion of copper into the active site of COX. Plays an essential role in embryo development. This chain is Protein SCO1 homolog 1, mitochondrial (HCC1), found in Arabidopsis thaliana (Mouse-ear cress).